The primary structure comprises 356 residues: Glycerol-1-phosphate dehydrogenase [NAD(P)+] (356 aa).

Residues 103–107 (GRSID) and 125–128 (TAAS) contribute to the NAD(+) site. A substrate-binding site is contributed by Asp130. Ser134 provides a ligand contact to NAD(+). Residue Asp177 participates in substrate binding. Zn(2+)-binding residues include Asp177 and His257. His261 is a binding site for substrate. Residue His273 coordinates Zn(2+).

It belongs to the glycerol-1-phosphate dehydrogenase family. Zn(2+) is required as a cofactor.

The protein resides in the cytoplasm. The enzyme catalyses sn-glycerol 1-phosphate + NAD(+) = dihydroxyacetone phosphate + NADH + H(+). It carries out the reaction sn-glycerol 1-phosphate + NADP(+) = dihydroxyacetone phosphate + NADPH + H(+). It functions in the pathway membrane lipid metabolism; glycerophospholipid metabolism. Its function is as follows. Catalyzes the NAD(P)H-dependent reduction of dihydroxyacetonephosphate (DHAP or glycerone phosphate) to glycerol 1-phosphate (G1P). The G1P thus generated is used as the glycerophosphate backbone of phospholipids in the cellular membranes of Archaea. The polypeptide is Glycerol-1-phosphate dehydrogenase [NAD(P)+] (Methanosarcina mazei (strain ATCC BAA-159 / DSM 3647 / Goe1 / Go1 / JCM 11833 / OCM 88) (Methanosarcina frisia)).